The sequence spans 311 residues: Trem-like transcript 1 protein (311 aa).

Residues 1-15 (MGLTLLLLLLLGLEG) form the signal peptide. The Ig-like V-type domain occupies 16–121 (QGIVGSLPEV…PQILHRVSLN (106 aa)). Residues 16–162 (QGIVGSLPEV…EPSQDEKSIP (147 aa)) are Extracellular-facing. Intrachain disulfides connect cysteine 38-cysteine 104 and cysteine 52-cysteine 59. The chain crosses the membrane as a helical span at residues 163-183 (LIWGAVLLVGLLVAAVVLFAV). Residues 184–311 (MAKRKQGNRL…NPPNNQTPSS (128 aa)) lie on the Cytoplasmic side of the membrane. A lipid anchor (S-palmitoyl cysteine) is attached at cysteine 196. The segment at 229–263 (VPHIRLDSPPSFDNTTYTSLPLDSPSGKPSLPAPS) is disordered. The span at 239 to 249 (SFDNTTYTSLP) shows a compositional bias: polar residues. The short motif at 279–284 (VTYATV) is the ITIM element. A disordered region spans residues 287–311 (PGGNKGGGTSCGPAQNPPNNQTPSS).

When phosphorylated, interacts with PTPN6. When phosphorylated, interacts with PTPN11. Post-translationally, phosphorylated on tyrosine residues. Detected in platelets, monocytic leukemia and in T-cell leukemia.

Its subcellular location is the cell membrane. The protein localises to the cytoplasm. Its function is as follows. Cell surface receptor that may play a role in the innate and adaptive immune response. The sequence is that of Trem-like transcript 1 protein (TREML1) from Homo sapiens (Human).